Here is a 53-residue protein sequence, read N- to C-terminus: Conotoxin Cal6.23 (53 aa).

The signal sequence occupies residues 1 to 22 (MKLTAVLMVAVLVLTACQLITA). 3 cysteine pairs are disulfide-bonded: Cys25–Cys40, Cys32–Cys47, and Cys39–Cys51.

It belongs to the conotoxin O1 superfamily. As to expression, expressed by the venom duct.

Its subcellular location is the secreted. Its function is as follows. Probable neurotoxin. This chain is Conotoxin Cal6.23, found in Californiconus californicus (California cone).